The primary structure comprises 205 residues: Protein phosphatase inhibitor 2 (205 aa).

The interval 1 to 44 (MAASTASHRPIKGILKNKTSTTSSMVASAEQPRGNVDEELSKKS) is disordered. Position 2 is an N-acetylalanine (Ala-2). 2 required for binding PPP1CC regions span residues 12–17 (KGILKN) and 43–55 (KSQK…ILAT). Over residues 17–26 (NKTSTTSSMV) the composition is skewed to polar residues. The segment covering 35-44 (NVDEELSKKS) has biased composition (basic and acidic residues). Ser-44 carries the post-translational modification Phosphoserine; by ATM. Residue Thr-73 is modified to Phosphothreonine; by GSK3. Position 87 is a phosphoserine (Ser-87). Phosphothreonine is present on residues Thr-89 and Thr-92. Residues 111 to 142 (EPKYRIQEQESSGEEDSDLSPEEREKKRQFEM) are disordered. Phosphoserine is present on residues Ser-121, Ser-122, Ser-127, and Ser-130. A compositionally biased stretch (acidic residues) spans 121 to 130 (SSGEEDSDLS). The span at 131 to 142 (PEEREKKRQFEM) shows a compositional bias: basic and acidic residues. The interval 147–150 (HYNE) is required for binding PPP1CC catalytic center, displacing metal ions and inhibition of PPP1CC catalytic activity. The disordered stretch occupies residues 163 to 205 (KDLHDDDEDEEMLETADGESMNTEESNQGSTPSDQQQNKLRSS). Residues 167 to 179 (DDDEDEEMLETAD) show a composition bias toward acidic residues. The segment covering 182–205 (SMNTEESNQGSTPSDQQQNKLRSS) has biased composition (polar residues).

It belongs to the protein phosphatase inhibitor 2 family. As to quaternary structure, heterodimer with PP1. In terms of processing, phosphorylation on Thr-73 by GSK3 activates PP1 by dissociating the PP1-PPP1R2 complex. Phosphorylation on Ser-44 by ATM activates PP1 by dissociating the PP1-PPP1R2 complex.

Functionally, inhibitor of protein-phosphatase 1. The polypeptide is Protein phosphatase inhibitor 2 (PPP1R2) (Homo sapiens (Human)).